The chain runs to 557 residues: Urocanate hydratase (557 aa).

The interval 1–20 (MSNPRHNEREVRSPRGDELN) is disordered. NAD(+) is bound by residues 52–53 (GG), Q130, 176–178 (GMG), E196, R201, 242–243 (NA), 263–267 (QTSAH), 273–274 (YL), and Y322. C410 is an active-site residue. An NAD(+)-binding site is contributed by G492.

Belongs to the urocanase family. NAD(+) serves as cofactor.

Its subcellular location is the cytoplasm. The catalysed reaction is 4-imidazolone-5-propanoate = trans-urocanate + H2O. Its pathway is amino-acid degradation; L-histidine degradation into L-glutamate; N-formimidoyl-L-glutamate from L-histidine: step 2/3. Catalyzes the conversion of urocanate to 4-imidazolone-5-propionate. In Brucella melitensis biotype 2 (strain ATCC 23457), this protein is Urocanate hydratase.